A 163-amino-acid polypeptide reads, in one-letter code: Nucleotide-binding protein LBJ_2391 (163 aa).

Belongs to the YajQ family.

Nucleotide-binding protein. The polypeptide is Nucleotide-binding protein LBJ_2391 (Leptospira borgpetersenii serovar Hardjo-bovis (strain JB197)).